Here is a 330-residue protein sequence, read N- to C-terminus: MGKINAENTSKHVTFSKNAFIPVCNWCRNVCGYCTFRNENFKLLKMDEMKEILTKADTFGCREALFTFGENVDENEKVKEELKKMGYSGILEYLYEISAWCLENTNLIPHTNCGILSYDELKYLREVNASMGLMLENSSARLCGTIAHEKSPGKDPKLRIEMIENAGKLKIPFTTGILIGIGETFEERVNSIFEIKRIHEKYGHIQEVIVQNFRSKPQIPMENYKEPSPVEMFKMIILSKLILEDISIQVPPNLNRETGQLFLMAGIDDWGGVSPLTKDFVNPEAPWPDIEELNIFSKELGFTLKERLPVYEKYITEEWVDKKILEKIKK.

Residues 13 to 253 (VTFSKNAFIP…EDISIQVPPN (241 aa)) form the Radical SAM core domain. [4Fe-4S] cluster-binding residues include Cys-27, Cys-31, and Cys-34.

This sequence belongs to the radical SAM superfamily. CofG family. As to quaternary structure, consists of two subunits, CofG and CofH. [4Fe-4S] cluster serves as cofactor.

It carries out the reaction 5-amino-5-(4-hydroxybenzyl)-6-(D-ribitylimino)-5,6-dihydrouracil + S-adenosyl-L-methionine = 7,8-didemethyl-8-hydroxy-5-deazariboflavin + 5'-deoxyadenosine + L-methionine + NH4(+) + H(+). The protein operates within cofactor biosynthesis; coenzyme F0 biosynthesis. Catalyzes the radical-mediated synthesis of 7,8-didemethyl-8-hydroxy-5-deazariboflavin from 5-amino-5-(4-hydroxybenzyl)-6-(D-ribitylimino)-5,6-dihydrouracil. This Methanococcus maripaludis (strain DSM 14266 / JCM 13030 / NBRC 101832 / S2 / LL) protein is 7,8-didemethyl-8-hydroxy-5-deazariboflavin synthase.